The sequence spans 425 residues: Queuine tRNA-ribosyltransferase accessory subunit 2 (425 aa).

The segment at 302–323 is disordered; that stretch reads QNGAQDLEKNSPEEDQEEEVVK. Residues cysteine 351, cysteine 353, cysteine 356, and histidine 382 each coordinate Zn(2+).

The protein belongs to the queuine tRNA-ribosyltransferase family. QTRT2 subfamily. In terms of assembly, heterodimer of a catalytic subunit QTRT1 and an accessory subunit QTRT2. The cofactor is Zn(2+).

The protein localises to the cytoplasm. It localises to the mitochondrion outer membrane. Non-catalytic subunit of the queuine tRNA-ribosyltransferase (TGT) that catalyzes the base-exchange of a guanine (G) residue with queuine (Q) at position 34 (anticodon wobble position) in tRNAs with GU(N) anticodons (tRNA-Asp, -Asn, -His and -Tyr), resulting in the hypermodified nucleoside queuosine (7-(((4,5-cis-dihydroxy-2-cyclopenten-1-yl)amino)methyl)-7-deazaguanosine). This chain is Queuine tRNA-ribosyltransferase accessory subunit 2, found in Gallus gallus (Chicken).